The chain runs to 484 residues: Glycogen synthase (484 aa).

Lysine 15 serves as a coordination point for ADP-alpha-D-glucose.

This sequence belongs to the glycosyltransferase 1 family. Bacterial/plant glycogen synthase subfamily.

The catalysed reaction is [(1-&gt;4)-alpha-D-glucosyl](n) + ADP-alpha-D-glucose = [(1-&gt;4)-alpha-D-glucosyl](n+1) + ADP + H(+). It functions in the pathway glycan biosynthesis; glycogen biosynthesis. Synthesizes alpha-1,4-glucan chains using ADP-glucose. The sequence is that of Glycogen synthase (glgA) from Bacillus subtilis (strain 168).